We begin with the raw amino-acid sequence, 262 residues long: uncharacterized protein (262 aa).

The 103-residue stretch at 5–107 (PLISLDVEGV…MIEHKLRTFC (103 aa)) folds into the BTB domain. In terms of domain architecture, CRIB spans 182 to 195 (ISLPRNFTHIAHVG).

This is an uncharacterized protein from Caenorhabditis elegans.